We begin with the raw amino-acid sequence, 104 residues long: L-rhamnose mutarotase (104 aa).

Tyrosine 18 is a substrate binding site. The active-site Proton donor is the histidine 22. Substrate contacts are provided by residues tyrosine 41 and 76-77; that span reads WW.

Belongs to the rhamnose mutarotase family. In terms of assembly, homodimer.

The protein resides in the cytoplasm. The catalysed reaction is alpha-L-rhamnose = beta-L-rhamnose. The protein operates within carbohydrate metabolism; L-rhamnose metabolism. Functionally, involved in the anomeric conversion of L-rhamnose. The sequence is that of L-rhamnose mutarotase from Escherichia coli (strain K12 / MC4100 / BW2952).